The sequence spans 340 residues: Methionine import ATP-binding protein MetN (340 aa).

Residues 2-241 form the ABC transporter domain; the sequence is IRIENLTKIY…PQSSVAKEFI (240 aa). Residue 38–45 coordinates ATP; that stretch reads GLSGAGKS.

The protein belongs to the ABC transporter superfamily. Methionine importer (TC 3.A.1.24) family. The complex is composed of two ATP-binding proteins (MetN), two transmembrane proteins (MetI) and a solute-binding protein (MetQ).

Its subcellular location is the cell membrane. The catalysed reaction is L-methionine(out) + ATP + H2O = L-methionine(in) + ADP + phosphate + H(+). It carries out the reaction D-methionine(out) + ATP + H2O = D-methionine(in) + ADP + phosphate + H(+). In terms of biological role, part of the ABC transporter complex MetNIQ involved in methionine import. Responsible for energy coupling to the transport system. The polypeptide is Methionine import ATP-binding protein MetN (Desulfitobacterium hafniense (strain Y51)).